The chain runs to 401 residues: Probable inactive purple acid phosphatase 14 (401 aa).

The first 30 residues, 1–30 (MEETRRRFVISSVLSVSLIYLCLSTCHVSA), serve as a signal peptide directing secretion. An N-linked (GlcNAc...) asparagine glycan is attached at N79. Residue N197 participates in substrate binding. N197 provides a ligand contact to Zn(2+). Residue N246 is glycosylated (N-linked (GlcNAc...) asparagine). H256 contacts Zn(2+). N-linked (GlcNAc...) asparagine glycosylation is present at N266. A Zn(2+)-binding site is contributed by H305. Position 305 to 307 (305 to 307 (HDH)) interacts with substrate. A Fe cation-binding site is contributed by H307. 2 N-linked (GlcNAc...) asparagine glycosylation sites follow: N371 and N384.

This sequence belongs to the metallophosphoesterase superfamily. Purple acid phosphatase family. As to quaternary structure, homodimer. The cofactor is Fe cation. It depends on Zn(2+) as a cofactor. In terms of tissue distribution, specifically expressed in flowers.

It localises to the secreted. This is Probable inactive purple acid phosphatase 14 (PAP14) from Arabidopsis thaliana (Mouse-ear cress).